Here is a 360-residue protein sequence, read N- to C-terminus: UPF0324 membrane protein DVU_0123 (360 aa).

The next 10 helical transmembrane spans lie at 20 to 42 (VTESLPGLLLVCAVALVASFVAP), 57 to 79 (KDFILAIIFGIIIRNTVGVPAVF), 100 to 122 (SYSLAGLVSVGAQALVFIAVFLF), 142 to 164 (AACLAAGMSVCGVSATIAIAPAV), 171 to 193 (MAYSIAVVLMFGLLALIAFPLIG), 203 to 225 (FGAFAGVGIVNSAQVLAAGFGFS), 232 to 254 (AGIYNIGRVVFLPFVVLMLAIMA), 278 to 297 (FPLFVLGFLAIVCLNTAGVL), 310 to 327 (EWAFLLGFASIGLTTRLS), and 337 to 359 (FLFGFGVAGLKAALALAAVLLFM).

Belongs to the UPF0324 family.

The protein localises to the cell membrane. This chain is UPF0324 membrane protein DVU_0123, found in Nitratidesulfovibrio vulgaris (strain ATCC 29579 / DSM 644 / CCUG 34227 / NCIMB 8303 / VKM B-1760 / Hildenborough) (Desulfovibrio vulgaris).